Consider the following 283-residue polypeptide: Digeranylgeranylglyceryl phosphate synthase (283 aa).

8 helical membrane passes run 21–41 (ITAS…EIDI), 45–65 (LLVF…NDIF), 97–117 (LILG…IAVI), 135–155 (IGNF…GVAG), 158–178 (VMPV…REIV), 204–224 (LYFA…PYIL), 226–246 (IFGI…IYAM), and 261–281 (VSKF…VGAI).

This sequence belongs to the UbiA prenyltransferase family. DGGGP synthase subfamily. It depends on Mg(2+) as a cofactor.

The protein resides in the cell membrane. It catalyses the reaction sn-3-O-(geranylgeranyl)glycerol 1-phosphate + (2E,6E,10E)-geranylgeranyl diphosphate = 2,3-bis-O-(geranylgeranyl)-sn-glycerol 1-phosphate + diphosphate. The protein operates within membrane lipid metabolism; glycerophospholipid metabolism. Its function is as follows. Prenyltransferase that catalyzes the transfer of the geranylgeranyl moiety of geranylgeranyl diphosphate (GGPP) to the C2 hydroxyl of (S)-3-O-geranylgeranylglyceryl phosphate (GGGP). This reaction is the second ether-bond-formation step in the biosynthesis of archaeal membrane lipids. This Methanocaldococcus jannaschii (strain ATCC 43067 / DSM 2661 / JAL-1 / JCM 10045 / NBRC 100440) (Methanococcus jannaschii) protein is Digeranylgeranylglyceryl phosphate synthase.